The chain runs to 189 residues: T cell receptor gamma constant 2 (189 aa).

The 95-residue stretch at 10–104 (PKPTIFLPSI…NKNGIDQEII (95 aa)) folds into the Ig-like domain. Cys-32 and Cys-88 are disulfide-bonded. 5 N-linked (GlcNAc...) asparagine glycosylation sites follow: Asn-66, Asn-120, Asn-136, Asn-142, and Asn-151. The helical transmembrane segment at 155–177 (YYTYLLLLLKSVVYFAIITCCLL) threads the bilayer.

Gamma-delta TR is a heterodimer composed of a gamma and delta chain; disulfide-linked. The gamma-delta TR is associated with the transmembrane signaling CD3 coreceptor proteins following the stoichiometry: a single gamma-delta TR heterodimer associates with one CD3D-CD3E heterodimer, one CD3G-CD3E heterodimer and one CD247 homodimer forming a stable octameric structure. Upon activation, gamma-delta TR complex associates with FCER1G to initiate intracellular signaling.

It is found in the cell membrane. In terms of biological role, constant region of T cell receptor (TR) gamma chain that participates in the antigen recognition. Gamma-delta TRs recognize a variety of self and foreign non-peptide antigens frequently expressed at the epithelial boundaries between the host and external environment, including endogenous lipids presented by MH-like protein CD1D and phosphoantigens presented by butyrophilin-like molecule BTN3A1. Upon antigen recognition induces rapid, innate-like immune responses involved in pathogen clearance and tissue repair. Binding of gamma-delta TR complex to antigen triggers phosphorylation of immunoreceptor tyrosine-based activation motifs (ITAMs) in the CD3 chains by the LCK and FYN kinases, allowing the recruitment, phosphorylation, and activation of ZAP70 that facilitates phosphorylation of the scaffolding proteins LCP2 and LAT. This lead to the formation of a supramolecular signalosome that recruits the phospholipase PLCG1, resulting in calcium mobilization and ERK activation, ultimately leading to T cell expansion and differentiation into effector cells. Gamma-delta TRs are produced through somatic rearrangement of a limited repertoire of variable (V), diversity (D), and joining (J) genes. The potential diversity of gamma-delta TRs is conferred by the unique ability to rearrange (D) genes in tandem and to utilize all three reading frames. The combinatorial diversity is considerably increased by the sequence exonuclease trimming and random nucleotide (N) region additions which occur during the V-(D)-J rearrangements. In Homo sapiens (Human), this protein is T cell receptor gamma constant 2.